Here is a 445-residue protein sequence, read N- to C-terminus: Phosphoglucosamine mutase (445 aa).

The Phosphoserine intermediate role is filled by serine 102. 4 residues coordinate Mg(2+): serine 102, aspartate 241, aspartate 243, and aspartate 245. Residue serine 102 is modified to Phosphoserine.

It belongs to the phosphohexose mutase family. Requires Mg(2+) as cofactor. In terms of processing, activated by phosphorylation.

The enzyme catalyses alpha-D-glucosamine 1-phosphate = D-glucosamine 6-phosphate. Functionally, catalyzes the conversion of glucosamine-6-phosphate to glucosamine-1-phosphate. The sequence is that of Phosphoglucosamine mutase from Rhodococcus jostii (strain RHA1).